The sequence spans 272 residues: Phosphatidylglycerol--prolipoprotein diacylglyceryl transferase (272 aa).

Helical transmembrane passes span 24 to 44, 59 to 79, 102 to 122, and 129 to 149; these read WYGI…KWIA, YFIW…ILFY, FIGI…IASF, and GVKF…GYVF. Arginine 151 is an a 1,2-diacyl-sn-glycero-3-phospho-(1'-sn-glycerol) binding site. Helical transmembrane passes span 180–200, 208–228, and 244–264; these read PSQL…LYAW, GQLG…AEFW, and MGQL…GYLA.

This sequence belongs to the Lgt family.

The protein localises to the cell inner membrane. The catalysed reaction is L-cysteinyl-[prolipoprotein] + a 1,2-diacyl-sn-glycero-3-phospho-(1'-sn-glycerol) = an S-1,2-diacyl-sn-glyceryl-L-cysteinyl-[prolipoprotein] + sn-glycerol 1-phosphate + H(+). The protein operates within protein modification; lipoprotein biosynthesis (diacylglyceryl transfer). Functionally, catalyzes the transfer of the diacylglyceryl group from phosphatidylglycerol to the sulfhydryl group of the N-terminal cysteine of a prolipoprotein, the first step in the formation of mature lipoproteins. This is Phosphatidylglycerol--prolipoprotein diacylglyceryl transferase from Wolinella succinogenes (strain ATCC 29543 / DSM 1740 / CCUG 13145 / JCM 31913 / LMG 7466 / NCTC 11488 / FDC 602W) (Vibrio succinogenes).